Here is a 399-residue protein sequence, read N- to C-terminus: S-adenosylmethionine synthase (399 aa).

Position 17 (histidine 17) interacts with ATP. Aspartate 19 provides a ligand contact to Mg(2+). Position 45 (glutamate 45) interacts with K(+). L-methionine contacts are provided by glutamate 58 and glutamine 101. The tract at residues 101–111 is flexible loop; sequence QSPDIAQGVDE. Residues 177–179, 244–245, aspartate 253, 259–260, alanine 276, and lysine 280 contribute to the ATP site; these read DAK, RF, and RK. Aspartate 253 lines the L-methionine pocket. Lysine 284 lines the L-methionine pocket.

Belongs to the AdoMet synthase family. As to quaternary structure, homotetramer; dimer of dimers. Mg(2+) is required as a cofactor. The cofactor is K(+).

The protein resides in the cytoplasm. It carries out the reaction L-methionine + ATP + H2O = S-adenosyl-L-methionine + phosphate + diphosphate. Its pathway is amino-acid biosynthesis; S-adenosyl-L-methionine biosynthesis; S-adenosyl-L-methionine from L-methionine: step 1/1. Its function is as follows. Catalyzes the formation of S-adenosylmethionine (AdoMet) from methionine and ATP. The overall synthetic reaction is composed of two sequential steps, AdoMet formation and the subsequent tripolyphosphate hydrolysis which occurs prior to release of AdoMet from the enzyme. This is S-adenosylmethionine synthase from Listeria monocytogenes serotype 4b (strain CLIP80459).